We begin with the raw amino-acid sequence, 347 residues long: Leukocyte cell-derived chemotaxin 1 (347 aa).

The tract at residues 1-29 is disordered; that stretch reads MAEGSEKVPIARAGPEDVEQGLPPAYTAA. A helical transmembrane segment spans residues 45–65; that stretch reads VLIAGALLLLAGAIGAFYFWK. A BRICHOS domain is found at 103 to 200; that stretch reads GSGSEEAVEV…LCGDLPIFWL (98 aa). A disulfide bridge links C130 with C192. A disordered region spans residues 208–281; it reads KQRERREMKR…DNPYNQLEGE (74 aa). Positions 210–213 are excised as a propeptide; the sequence is RERR. A compositionally biased stretch (polar residues) spans 240-276; the sequence is TRSTPTQLTQDLGPQSNETRPMQQESDQTLNPDNPYN. N256 is a glycosylation site (N-linked (GlcNAc...) asparagine). 4 disulfide bridges follow: C295–C299, C296–C336, C306–C330, and C310–C326.

Belongs to the chondromodulin-1 family. Post-translationally, after cleavage, the post-translationally modified ChM-I is secreted as a glycoprotein. As to expression, expressed in the cartilage and in fetal precartilaginous tissues as well as in heart and eye.

It is found in the secreted. It localises to the extracellular space. The protein localises to the extracellular matrix. The protein resides in the endomembrane system. In terms of biological role, bifunctional growth regulator. May contribute to the rapid growth of cartilage and vascular invasion prior to the replacement of cartilage by bone during endochondral bone development. Plays a role as antiangiogenic factor in cardiac valves to suppress neovascularization. The protein is Leukocyte cell-derived chemotaxin 1 of Gallus gallus (Chicken).